The sequence spans 511 residues: Maturase K (511 aa).

It belongs to the intron maturase 2 family. MatK subfamily.

The protein resides in the plastid. It is found in the chloroplast. Functionally, usually encoded in the trnK tRNA gene intron. Probably assists in splicing its own and other chloroplast group II introns. In Trifolium burchellianum (Wild clover), this protein is Maturase K.